We begin with the raw amino-acid sequence, 217 residues long: MQRFTDFYAAMHGGSSVTPTGLGYIPMVIEQSGRGERAYDIYSRLLRERLIFLVGPVNDNTANLVVAQLLFLESENPDKDISFYINSPGGSVYAGMAIYDTMQFIKPDVSTLCTGLAASMGAFLLAAGKKGKRFTLPNSRIMIHQPSGGAQGQASDIQIQAREILDLRERLNRILAENTGQPVERIAVDTERDNFMSAEDAVSYGLVDKVLTSRAQT.

Residue Ser-119 is the Nucleophile of the active site. The active site involves His-144.

It belongs to the peptidase S14 family. In terms of assembly, fourteen ClpP subunits assemble into 2 heptameric rings which stack back to back to give a disk-like structure with a central cavity, resembling the structure of eukaryotic proteasomes.

It localises to the cytoplasm. The enzyme catalyses Hydrolysis of proteins to small peptides in the presence of ATP and magnesium. alpha-casein is the usual test substrate. In the absence of ATP, only oligopeptides shorter than five residues are hydrolyzed (such as succinyl-Leu-Tyr-|-NHMec, and Leu-Tyr-Leu-|-Tyr-Trp, in which cleavage of the -Tyr-|-Leu- and -Tyr-|-Trp bonds also occurs).. Functionally, cleaves peptides in various proteins in a process that requires ATP hydrolysis. Has a chymotrypsin-like activity. Plays a major role in the degradation of misfolded proteins. The chain is ATP-dependent Clp protease proteolytic subunit from Bordetella bronchiseptica (strain ATCC BAA-588 / NCTC 13252 / RB50) (Alcaligenes bronchisepticus).